A 238-amino-acid polypeptide reads, in one-letter code: ATP synthase subunit a (238 aa).

The next 5 helical transmembrane spans lie at 16–36 (LIWL…TVLF), 79–99 (GLFM…FFPV), 103–123 (FVFG…SSLL), 129–149 (GLMS…MVVV), and 209–229 (VFGA…CVLL).

This sequence belongs to the ATPase A chain family. As to quaternary structure, F-type ATPases have 2 components, CF(1) - the catalytic core - and CF(0) - the membrane proton channel. CF(1) has five subunits: alpha(3), beta(3), gamma(1), delta(1), epsilon(1). CF(0) has three main subunits: a, b and c.

Its subcellular location is the mitochondrion inner membrane. Mitochondrial membrane ATP synthase (F(1)F(0) ATP synthase or Complex V) produces ATP from ADP in the presence of a proton gradient across the membrane which is generated by electron transport complexes of the respiratory chain. F-type ATPases consist of two structural domains, F(1) - containing the extramembraneous catalytic core and F(0) - containing the membrane proton channel, linked together by a central stalk and a peripheral stalk. During catalysis, ATP synthesis in the catalytic domain of F(1) is coupled via a rotary mechanism of the central stalk subunits to proton translocation. Key component of the proton channel; it may play a direct role in the translocation of protons across the membrane. The chain is ATP synthase subunit a (ATP6) from Mytilus edulis (Blue mussel).